The following is a 448-amino-acid chain: Glutamyl-tRNA reductase (448 aa).

Substrate is bound by residues 49–52, Ser109, 114–116, and Gln120; these read TCNR and ETQ. The Nucleophile role is filled by Cys50. Position 189-194 (189-194) interacts with NADP(+); it reads GAGEMG.

The protein belongs to the glutamyl-tRNA reductase family. Homodimer.

It carries out the reaction (S)-4-amino-5-oxopentanoate + tRNA(Glu) + NADP(+) = L-glutamyl-tRNA(Glu) + NADPH + H(+). The protein operates within porphyrin-containing compound metabolism; protoporphyrin-IX biosynthesis; 5-aminolevulinate from L-glutamyl-tRNA(Glu): step 1/2. Catalyzes the NADPH-dependent reduction of glutamyl-tRNA(Glu) to glutamate 1-semialdehyde (GSA). In Staphylococcus epidermidis (strain ATCC 12228 / FDA PCI 1200), this protein is Glutamyl-tRNA reductase.